The following is a 139-amino-acid chain: Cystatin-1 (139 aa).

The signal sequence occupies residues 1-22 (MHSRLPVPASLCLLLLLPSVLP). The region spanning 27-127 (GGLSPRDVTD…CHFEVWSRPW (101 aa)) is the Cystatin domain. A Secondary area of contact motif is present at residues 71-75 (QVVSG). 2 cysteine pairs are disulfide-bonded: C89–C105 and C118–C138.

This sequence belongs to the cystatin family. As to expression, expressed by the venom gland.

Its subcellular location is the secreted. Inhibits various C1 cysteine proteases including cathepsin L, papain and cathepsin B. This protein has no toxic activity and its function in the venom is unknown. It may play a role as housekeeping or regulatory protein. The protein is Cystatin-1 of Crotalus adamanteus (Eastern diamondback rattlesnake).